The sequence spans 92 residues: Small ribosomal subunit protein bS20 (92 aa).

A disordered region spans residues 1 to 25 (MANSAQARKRARQAAKANSHNSALR).

This sequence belongs to the bacterial ribosomal protein bS20 family.

Functionally, binds directly to 16S ribosomal RNA. The sequence is that of Small ribosomal subunit protein bS20 from Burkholderia mallei (strain NCTC 10247).